Here is a 176-residue protein sequence, read N- to C-terminus: NAD(P)H-quinone oxidoreductase subunit 6, chloroplastic (176 aa).

Helical transmembrane passes span 10 to 30, 32 to 52, 61 to 81, 92 to 112, and 152 to 172; these read FLLV…VLLP, PIYS…FYIL, AQLL…VMFM, LWTV…ISLI, and FFLP…GAIA.

The protein belongs to the complex I subunit 6 family. NDH is composed of at least 16 different subunits, 5 of which are encoded in the nucleus.

Its subcellular location is the plastid. The protein resides in the chloroplast thylakoid membrane. The catalysed reaction is a plastoquinone + NADH + (n+1) H(+)(in) = a plastoquinol + NAD(+) + n H(+)(out). It catalyses the reaction a plastoquinone + NADPH + (n+1) H(+)(in) = a plastoquinol + NADP(+) + n H(+)(out). Functionally, NDH shuttles electrons from NAD(P)H:plastoquinone, via FMN and iron-sulfur (Fe-S) centers, to quinones in the photosynthetic chain and possibly in a chloroplast respiratory chain. The immediate electron acceptor for the enzyme in this species is believed to be plastoquinone. Couples the redox reaction to proton translocation, and thus conserves the redox energy in a proton gradient. The protein is NAD(P)H-quinone oxidoreductase subunit 6, chloroplastic (ndhG) of Atropa belladonna (Belladonna).